The following is a 269-amino-acid chain: Energy-coupling factor transporter ATP-binding protein EcfA1 (269 aa).

In terms of domain architecture, ABC transporter spans 8–242 (IVFKNVSFQY…AEELTRIGLD (235 aa)). 42-49 (GHNGSGKS) provides a ligand contact to ATP.

This sequence belongs to the ABC transporter superfamily. Energy-coupling factor EcfA family. Forms a stable energy-coupling factor (ECF) transporter complex composed of 2 membrane-embedded substrate-binding proteins (S component), 2 ATP-binding proteins (A component) and 2 transmembrane proteins (T component).

The protein resides in the cell membrane. In terms of biological role, ATP-binding (A) component of a common energy-coupling factor (ECF) ABC-transporter complex. Unlike classic ABC transporters this ECF transporter provides the energy necessary to transport a number of different substrates. The polypeptide is Energy-coupling factor transporter ATP-binding protein EcfA1 (Staphylococcus aureus (strain USA300)).